Reading from the N-terminus, the 158-residue chain is Snaclec convulxin subunit alpha (158 aa).

An N-terminal signal peptide occupies residues 1 to 23 (MGRFIFVSFGLLVLFLSLSGTGA). Disulfide bonds link Cys-27-Cys-38, Cys-55-Cys-152, and Cys-127-Cys-144. The 125-residue stretch at 34 to 158 (YDQHCYRIFN…PFVCKFPPQC (125 aa)) folds into the C-type lectin domain.

It belongs to the snaclec family. In terms of assembly, tetramer of heterodimers of alpha and beta subunits (alphabeta)(4); disulfide-linked. In terms of tissue distribution, expressed by the venom gland.

The protein resides in the secreted. Functionally, snake venom lectin that activates platelets by binding to the platelet collagen receptor glycoprotein VI (GP6). The indirect activation of integrin alpha-IIb/beta-3 (ITGA2B/ITGB3) also induced by the toxin is upstream the cytoskeletal translocation of GPIb, FcRgamma (FCER1G) and 14-3-3zeta (YWHAZ). The polypeptide is Snaclec convulxin subunit alpha (Crotalus durissus terrificus (South American rattlesnake)).